We begin with the raw amino-acid sequence, 113 residues long: Protein USP1 (113 aa).

The N-terminal stretch at 1 to 18 is a signal peptide; it reads MKITMLFAALSAASGAFA. 6 repeat units span residues 32-37, 40-45, 46-49, 50-53, 59-65, and 69-75. The interval 32–45 is 2 X 6 AA repeats; the sequence is IGAGVGIGIGAGVG. Positions 46-53 are 2 X 4 AA approximate tandem repeats; the sequence is PYGYPYGA. The 2 X 7 AA approximate repeats stretch occupies residues 59–75; that stretch reads LQLLPLRWLSLQWIPLR.

The protein localises to the secreted. This chain is Protein USP1 (USP1), found in Puccinia graminis (Black stem rust fungus).